The following is a 130-amino-acid chain: Small ribosomal subunit protein uS9 (130 aa).

The protein belongs to the universal ribosomal protein uS9 family.

The protein is Small ribosomal subunit protein uS9 of Nitrosomonas eutropha (strain DSM 101675 / C91 / Nm57).